The primary structure comprises 492 residues: N-succinylglutamate 5-semialdehyde dehydrogenase (492 aa).

NAD(+) is bound at residue Gly-220–Gly-225. Catalysis depends on residues Glu-243 and Cys-277.

It belongs to the aldehyde dehydrogenase family. AstD subfamily.

The enzyme catalyses N-succinyl-L-glutamate 5-semialdehyde + NAD(+) + H2O = N-succinyl-L-glutamate + NADH + 2 H(+). It participates in amino-acid degradation; L-arginine degradation via AST pathway; L-glutamate and succinate from L-arginine: step 4/5. Its function is as follows. Catalyzes the NAD-dependent reduction of succinylglutamate semialdehyde into succinylglutamate. This chain is N-succinylglutamate 5-semialdehyde dehydrogenase, found in Escherichia coli O81 (strain ED1a).